The chain runs to 335 residues: Probable nicotianamine synthase 2 (335 aa).

This sequence belongs to the nicotianamine synthase (NAS)-like family.

It carries out the reaction 3 S-adenosyl-L-methionine = nicotianamine + 3 S-methyl-5'-thioadenosine + 3 H(+). Functionally, synthesizes nicotianamine, a polyamine that is the first intermediate in the synthesis of the phytosiderophores of the mugineic acid type found in gramineae which serves as a sensor for the physiological iron status within the plant, and/or might be involved in the transport of iron. This chain is Probable nicotianamine synthase 2 (NAS2), found in Hordeum vulgare (Barley).